The following is a 438-amino-acid chain: MKKLLPLFVSAALGTLSSAVWAENLAEIYNQAKENDPQLLSVAAQRDAAFEAVTSSRSALLPQINLTAGYNINRSDQAPRESDLLSAGINFSQELYQRSSWVSLDTAEKKARQADSQYAATQQGLILRVAKAYFEVLRAQDNLEFVRAEKAAVGRQLEQTKQRFEVGLSAITDVHDAQAQFDGVLADEVLAENSLTNSYEALREITGQEYSKLAVLDTKRFAASRTTESSEALIEKAQQQNLSLLAARISQDVARDNISLASSGHLPSLTLDGGYNYGNNSNDNAKNTSGEEYNDFKIGVNLKVPLYTGGNTTSLTKQAEFAYVAASQDLEAAYRSVVKDVRAYNNNINASIGALRAYEQAVISAKSALEATEAGFDVGTRTIVDVLDATRRLYDANKNLSNARYDYILSVLQLRQAIGTLSEQDVMDVNAGLKVAKK.

A signal peptide spans 1-22 (MKKLLPLFVSAALGTLSSAVWA).

Belongs to the outer membrane factor (OMF) (TC 1.B.17) family. In terms of assembly, homotrimer. Part of tripartite efflux systems, which are composed of an inner membrane transporter, a periplasmic membrane fusion protein, and an outer membrane component, TolC. The complexes form a large protein conduit and can translocate molecules across both the inner and outer membranes.

The protein resides in the cell outer membrane. Its function is as follows. Outer membrane channel, which is required for the function of several efflux systems. Required to export RtxA cytotoxin. The chain is Outer membrane protein TolC (tolC) from Vibrio cholerae serotype O1 (strain ATCC 39315 / El Tor Inaba N16961).